The primary structure comprises 609 residues: MITVIKWLVSGCCALAAVTTRAPLPKDCRNTPNSRGCWKDGFDILTDYTDPKRAPPGKLVEYNLTVSQQVIAPDGYEKLGMVANGQFPGPTIEADWGDTIRISVYNNFTDNNNGSAIHWHGLRQFENNVQDGVPGVTQCPSKPGETQVYEFRATQYGTSWYHSHFSLQCECPLNGLFGPIVIHGPSSMDWDEDLGPWLLHDWYHDDVFSLLWVGETKNRGAIPESTILNGKGKFDCNHHNDTRCTGTGGEYFEVNFRKGVRYKFTIANTGTLLEYMFWIDGHNLTVIAADFVPIEPYVTDVVNVAMGQRYEIIVEANADFTHGSNFWIYAQYCDEVDLLPHKAVGIVRYDEQDRQDPRTPPLSDQHRDFGCEDPDLDNLVPVVQQSVGRRVNRMEMKDYLRMGQEGYPDPMNFDGDLHKWVLGDVPMFVDWKNPSLKKLAVDEHPDFPPETVPILLDFDTGDWVHFVITNNYTFEKVHFPRNLTPVMHPMHLHGHDFAILAQGRGEFDPSIVPKLDNPPRRDVVNVDTGSYVWIAFQVNNPGAWLLHCHIAFHVSSGLSLQFIEQPKKVKPLMEAAGVLGEFHDRCAKWTEYYDSVNIPDNHTIDDSGI.

A signal peptide spans 1 to 16 (MITVIKWLVSGCCALA). N-linked (GlcNAc...) asparagine glycans are attached at residues asparagine 63, asparagine 107, asparagine 113, asparagine 240, asparagine 283, asparagine 471, and asparagine 601. 3 consecutive Plastocyanin-like domains span residues 66–186 (VSQQ…HGPS), 196–351 (PWLL…RYDE), and 429–567 (VDWK…EQPK).

It belongs to the multicopper oxidase family. As to expression, specifically expressed in conidia.

It participates in secondary metabolite biosynthesis. Functionally, oxidoreductase; part of the gene cluster that mediates the biosynthesis of trypacidin, a mycotoxin with antiprotozoal activity and that plays a role in the infection process. The pathway begins with the synthesis of atrochrysone thioester by the polyketide synthase (PKS) tpcC. The atrochrysone carboxyl ACP thioesterase tpcB then breaks the thioester bond and releases the atrochrysone carboxylic acid from tpcC. The decarboxylase tpcK converts atrochrysone carboxylic acid to atrochrysone which is further reduced into emodin anthrone. The next step is performed by the emodin anthrone oxygenase tpcL that catalyzes the oxidation of emodinanthrone to emodin. Emodin O-methyltransferase encoded by tpcA catalyzes methylation of the 8-hydroxy group of emodin to form questin. Ring cleavage of questin by questin oxidase tpcI leads to desmethylsulochrin via several intermediates including questin epoxide. Another methylation step catalyzed by tpcM leads to the formation of sulochrin which is further converted to monomethylsulfochrin by tpcH. Finally, the tpcJ catalyzes the conversion of monomethylsulfochrin to trypacidin. Trypacidin is toxic for human pulmonary and bronchial epithelial cells by initiating the intracellular formation of nitric oxide (NO) and hydrogen peroxide (H(2)O(2)), thus triggering host necrotic cell death. The trypacidin pathway is also able to produce endocrocin via a distinct route from the endocrocin Enc pathway. The chain is Oxidoreductase tpcJ from Aspergillus fumigatus (strain ATCC MYA-4609 / CBS 101355 / FGSC A1100 / Af293) (Neosartorya fumigata).